Reading from the N-terminus, the 432-residue chain is Homogentisate 1,2-dioxygenase (432 aa).

Residue histidine 287 is the Proton acceptor of the active site. Fe cation contacts are provided by histidine 330 and glutamate 336. 2 residues coordinate homogentisate: tyrosine 345 and histidine 366. Histidine 366 is a binding site for Fe cation.

The protein belongs to the homogentisate dioxygenase family. In terms of assembly, hexamer; dimer of trimers. Requires Fe cation as cofactor.

The catalysed reaction is homogentisate + O2 = 4-maleylacetoacetate + H(+). The protein operates within amino-acid degradation; L-phenylalanine degradation; acetoacetate and fumarate from L-phenylalanine: step 4/6. Its function is as follows. Involved in the catabolism of homogentisate (2,5-dihydroxyphenylacetate or 2,5-OH-PhAc), a central intermediate in the degradation of phenylalanine and tyrosine. Catalyzes the oxidative ring cleavage of the aromatic ring of homogentisate to yield maleylacetoacetate. The protein is Homogentisate 1,2-dioxygenase of Pseudomonas aeruginosa (strain UCBPP-PA14).